The following is a 473-amino-acid chain: Probable glucose-6-phosphate 1-dehydrogenase C7.13c (473 aa).

Arg43, Tyr121, and Lys144 together coordinate NADP(+). D-glucose 6-phosphate is bound by residues Lys144, His174–Lys178, Glu213, and Asp232. The Proton acceptor role is filled by His237. D-glucose 6-phosphate is bound at residue Lys331. Lys341 is a binding site for NADP(+). Gln366 is a binding site for D-glucose 6-phosphate.

This sequence belongs to the glucose-6-phosphate dehydrogenase family.

Its subcellular location is the cytoplasm. The catalysed reaction is D-glucose 6-phosphate + NADP(+) = 6-phospho-D-glucono-1,5-lactone + NADPH + H(+). It participates in carbohydrate degradation; pentose phosphate pathway; D-ribulose 5-phosphate from D-glucose 6-phosphate (oxidative stage): step 1/3. In terms of biological role, catalyzes the rate-limiting step of the oxidative pentose-phosphate pathway, which represents a route for the dissimilation of carbohydrates besides glycolysis. The main function of this enzyme is to provide reducing power (NADPH) and pentose phosphates for fatty acid and nucleic acid synthesis. This chain is Probable glucose-6-phosphate 1-dehydrogenase C7.13c, found in Schizosaccharomyces pombe (strain 972 / ATCC 24843) (Fission yeast).